Here is a 322-residue protein sequence, read N- to C-terminus: uncharacterized protein (322 aa).

A run of 4 helical transmembrane segments spans residues 24-44, 68-88, 100-120, and 125-145; these read LLHLQNFASAGIITILCIQIT, LFFELIGYHPFVIGALLLIFI, IVTSSVIILHLYMSGGITPTF, and VQLITVGIGVALLMNLYMPSL.

The protein resides in the cell membrane. This is an uncharacterized protein from Bacillus subtilis (strain 168).